A 369-amino-acid chain; its full sequence is MAFAGLKKQINKANQYVTEKMGGAEGTKLDLDFMDMERKTDVTVELVEELQLKTKEFLQPNPTARAKMAAVKGISKLSGQAKSNTYPQPEGLLAECMLTYGKKLGEDNSVFAQALVEFGEALKQMADVKYSLDDNIKQNFLEPLHHMQTKDLKEVMHHRKKLQGRRLDFDCKRRRQAKDDEIRGAEDKFAESLQLAQVGMFNLLENDTEHVSQLVTFAEALYDFHSQCADVLRGLQETLQEKRAEAESRPRNEFVPKTLLDLNLDGGGGGLIDDGTPSHISSSASPLPSPMRSPAKSMAVTPNRQQQPCCQALYDFDPENPGELGFKENDIITLLNRVDDNWYEGAVNGRTGYFPQSYVQVQVPLPNGN.

One can recognise a BAR domain in the interval 18–248 (TEKMGGAEGT…LQEKRAEAES (231 aa)). Residues 227–249 (QCADVLRGLQETLQEKRAEAESR) adopt a coiled-coil conformation. The span at 275 to 294 (GTPSHISSSASPLPSPMRSP) shows a compositional bias: low complexity. The interval 275-297 (GTPSHISSSASPLPSPMRSPAKS) is disordered. The SH3 domain maps to 305–364 (QQQPCCQALYDFDPENPGELGFKENDIITLLNRVDDNWYEGAVNGRTGYFPQSYVQVQVP).

Belongs to the endophilin family.

The protein localises to the cytoplasm. The protein resides in the membrane. Required presynaptically at the neuromuscular junction. Implicated in synaptic vesicle endocytosis. In Drosophila virilis (Fruit fly), this protein is Endophilin-A.